Consider the following 504-residue polypeptide: Multicopper oxidase MmcO (504 aa).

The tat-type signal signal peptide spans 1-44; it reads MPELATSGNAFDKRRFSRRGFLGAGIASGFALAACASKPTASGA. Cu cation is bound by residues His-120, His-122, His-161, and His-163. The Plastocyanin-like domain occupies 190 to 349; sequence EWIIILDDWT…NALARALLST (160 aa). The Cu cation site is built by His-437, His-440, His-442, His-485, Cys-486, His-487, and His-491.

It belongs to the multicopper oxidase family. The cofactor is Cu cation. In terms of processing, predicted to be exported by the Tat system. The position of the signal peptide cleavage has not been experimentally proven.

It is found in the cell inner membrane. It localises to the periplasm. It catalyses the reaction 4 Fe(2+) + O2 + 4 H(+) = 4 Fe(3+) + 2 H2O. Functionally, required for copper resistance. In vitro, oxidizes organic substrates and Fe(2+). May act in vivo by oxidation of toxic periplasmic Cu(+). The polypeptide is Multicopper oxidase MmcO (Mycobacterium tuberculosis (strain ATCC 25618 / H37Rv)).